A 109-amino-acid polypeptide reads, in one-letter code: Iron-sulfur cluster assembly protein CyaY (109 aa).

This sequence belongs to the frataxin family.

In terms of biological role, involved in iron-sulfur (Fe-S) cluster assembly. May act as a regulator of Fe-S biogenesis. The polypeptide is Iron-sulfur cluster assembly protein CyaY (Shewanella baltica (strain OS155 / ATCC BAA-1091)).